The chain runs to 423 residues: Aspartate--tRNA(Asp) ligase (423 aa).

Glu-163 lines the L-aspartate pocket. Residues 185 to 188 (QLYK) are aspartate. Arg-207 contributes to the L-aspartate binding site. ATP is bound by residues 207-209 (RAE), 215-217 (RHL), and Glu-346. Residues Glu-346 and Ser-349 each contribute to the Mg(2+) site. L-aspartate is bound by residues Ser-349 and Arg-353. 394–397 (GLER) serves as a coordination point for ATP.

Belongs to the class-II aminoacyl-tRNA synthetase family. Type 2 subfamily. In terms of assembly, homodimer. Requires Mg(2+) as cofactor.

Its subcellular location is the cytoplasm. It catalyses the reaction tRNA(Asp) + L-aspartate + ATP = L-aspartyl-tRNA(Asp) + AMP + diphosphate. Functionally, catalyzes the attachment of L-aspartate to tRNA(Asp) in a two-step reaction: L-aspartate is first activated by ATP to form Asp-AMP and then transferred to the acceptor end of tRNA(Asp). The sequence is that of Aspartate--tRNA(Asp) ligase from Picrophilus torridus (strain ATCC 700027 / DSM 9790 / JCM 10055 / NBRC 100828 / KAW 2/3).